The primary structure comprises 455 residues: Probable hexose phosphate transport protein (455 aa).

Transmembrane regions (helical) follow at residues 34-54, 70-90, 113-133, 161-181, and 185-205; these read IFYS…SFTF, LGII…VSGV, IFFG…LNGW, VWST…GFII, and GWRG…LVLI. A disordered region spans residues 219–242; sequence PIEKYKRDPHHAHHEGKSASEGTE. Helical transmembrane passes span 257-277, 302-322, 331-351, 363-383, 394-414, and 424-444; these read YVLT…IYIV, FCVS…GWLS, GPMN…MWFS, LLFV…LAAA, ASGF…YPLG, and GFFI…LPTW.

Belongs to the major facilitator superfamily. Organophosphate:Pi antiporter (OPA) (TC 2.A.1.4) family.

It is found in the cell membrane. Transport protein for sugar phosphate uptake. This chain is Probable hexose phosphate transport protein (uhpC), found in Chlamydia pneumoniae (Chlamydophila pneumoniae).